The following is a 3416-amino-acid chain: Genome polyprotein (3416 aa).

The interval 1–34 (MAKGAVLKGKGGGPPRRVPKETAKKTRQGPGRLP) is disordered. At 1–99 (MAKGAVLKGK…NRRRGKRRST (99 aa)) the chain is on the cytoplasmic side. Positions 97-117 (RSTTGLLTSILLACLATLVIS) are cleaved as a propeptide — ER anchor for the capsid protein C, removed in mature form by serine protease NS3. The chain crosses the membrane as a helical span at residues 100 to 120 (TGLLTSILLACLATLVISATI). The Extracellular segment spans residues 121-243 (RRERTGDMVI…HLTRVEGWVW (123 aa)). N-linked (GlcNAc...) asparagine; by host glycosylation occurs at N145. Residues 244–261 (KNKLLTMAFCAVVWMVTD) form a helical membrane-spanning segment. A topological domain (cytoplasmic) is located at residue S262. Residues 263–281 (LPTRFIVITVALCLAPTYA) form a helical membrane-spanning segment. Topologically, residues 282 to 728 (TRCTHLQNRD…HTAFGAAFNT (447 aa)) are extracellular. Intrachain disulfides connect C284-C311, C341-C397, C341-C402, C355-C386, C373-C397, and C373-C402. The fusion peptide stretch occupies residues 379–392 (DRGWGNHCGLFGKG). The N-linked (GlcNAc...) asparagine; by host glycan is linked to N435. 2 disulfides stabilise this stretch: C467-C571 and C588-C619. The helical transmembrane segment at 729 to 749 (IFGGVGFLPRILLGVALAWLG) threads the bilayer. Over 750–756 (LNSRNPT) the chain is Cytoplasmic. The helical transmembrane segment at 757–777 (LSVGFLITGGLVLTMTLGVGA) threads the bilayer. Over 778-1134 (DMGCAIDANR…RSMVLADNGA (357 aa)) the chain is Extracellular. 6 cysteine pairs are disulfide-bonded: C781-C792, C832-C922, C957-C1002, C1059-C1108, C1070-C1092, and C1091-C1095. N-linked (GlcNAc...) asparagine; by host glycosylation is found at N862, N985, and N1001. Residues 1135 to 1155 (MLSEGGVPGIVAVFVVLELVI) form a helical membrane-spanning segment. At 1156 to 1162 (RRRPTTG) the chain is on the cytoplasmic side. The chain crosses the membrane as a helical span at residues 1163–1183 (TSVVWCGVVVLGLVVTGLVTI). The Lumenal segment spans residues 1184–1189 (EGLCRY). Residues 1190–1210 (VVAVGILMSMELGPEIVALVL) form a helical membrane-spanning segment. At 1211–1235 (LQAVFDMRTGLLVAFAVKRAYTTRE) the chain is on the cytoplasmic side. A helical transmembrane segment spans residues 1236-1256 (AVVTYFLLLVLELGFPEASLS). At 1257-1295 (NIWKWADSLAMGTLILQACSQEGRARVGYLLAAMMTQKD) the chain is on the lumenal side. A helical transmembrane segment spans residues 1296 to 1316 (MAIIHTGLTIFLSAATAMAVW). Residues 1317-1361 (SMIKGQRDQKGLSWATPLVGLFGGEGVGLRLLAFRRLAERRNRRS) are Cytoplasmic-facing. The chain crosses the membrane as a helical span at residues 1362 to 1379 (FSEPLTVVGVMLTVASGM). Residues 1380-1384 (VRHTS) are Lumenal-facing. A helical transmembrane segment spans residues 1385-1405 (QEALCALVAGAFLLLMMVLGT). Over 1406–1458 (RKMQLIAEWCGEVEWNPDLVNEGGEVNLKVRQDAMGNLHLTEVEKEERAMALW) the chain is Cytoplasmic. The segment at 1412-1451 (AEWCGEVEWNPDLVNEGGEVNLKVRQDAMGNLHLTEVEKE) is interacts with and activates NS3 protease. The helical intramembrane region spans 1459–1479 (LLAGLVASAFHWAGILIVLAI). The Cytoplasmic portion of the chain corresponds to 1480–2162 (WTFFEMLSSG…RMAERDAPEA (683 aa)). The 180-residue stretch at 1492–1671 (SELVFSGQGT…EAEKSRPELP (180 aa)) folds into the Peptidase S7 domain. Residues H1545, D1569, and S1629 each act as charge relay system; for serine protease NS3 activity in the active site. A Helicase ATP-binding domain is found at 1677–1833 (TGWMSKGQIT…ESNGAIMSEE (157 aa)). 1690-1697 (MHPGSGKT) contacts ATP. Positions 1781–1784 (DEAH) match the DEAH box motif. Residues 1844–2002 (GFDWITEYEG…TLRGPVATFY (159 aa)) enclose the Helicase C-terminal domain. An N6-acetyllysine; by host modification is found at K1885. The chain crosses the membrane as a helical span at residues 2163-2183 (FLTIVEVAVLGVATLGILWCF). Residues 2184–2191 (VARTSVSR) lie on the Lumenal side of the membrane. The helical intramembrane region spans 2192 to 2211 (MFLGTVVLFAALLLLWIGGV). Residue D2212 is a topological domain, lumenal. Residues 2213 to 2233 (YGYMAGIALIFYIFLTVLQPE) form a helical membrane-spanning segment. The Cytoplasmic portion of the chain corresponds to 2234-2246 (PGKQRSSDDNRLA). A helical membrane pass occupies residues 2247-2267 (YFLLGLLSLAGLVTANEMGML). The Lumenal segment spans residues 2268–2301 (DKTKADLAGLMWHGEQRHPAWEEWTNVDIQPARS). An intramembrane region (helical) is located at residues 2302 to 2322 (WGTYVLIVSLFTPYMLHQLQT). Topologically, residues 2323 to 2345 (KIQQLVNSSVASGAQAMRDLGGG) are lumenal. An intramembrane region (helical) is located at residues 2346–2366 (TPFFGVAGHVIALGVTSLVGA). The Lumenal portion of the chain corresponds to 2367 to 2368 (TP). Residues 2369–2389 (LSLGLGVALAAFHLAIVASGL) traverse the membrane as a helical segment. Over 2390–2432 (EAELTQRAHRVFFSAMVKNPMVDGDVINPFPDGEPKPVLYERR) the chain is Cytoplasmic. Residues 2433-2453 (MSLILAIALCMVSVVLNRTAA) form a helical membrane-spanning segment. At 2454 to 2476 (SMTEAGAVGLAALGQLVHPETET) the chain is on the lumenal side. The helical transmembrane segment at 2477–2497 (LWTMPMACGMAGLVRGSFWGL) threads the bilayer. The Cytoplasmic portion of the chain corresponds to 2498–3416 (LPMGHRLWLK…WDLKLESNII (919 aa)). One can recognise an mRNA cap 0-1 NS5-type MT domain in the interval 2514–2778 (GGADGETLGD…EVDLGTGTRC (265 aa)). S2569 serves as a coordination point for S-adenosyl-L-methionine. Residue S2569 is modified to Phosphoserine. The active-site For 2'-O-MTase activity is the K2574. Residues G2599, W2600, T2617, I2618, D2644, and V2645 each coordinate S-adenosyl-L-methionine. The For 2'-O-MTase activity role is filled by D2659. Position 2660 (I2660) interacts with S-adenosyl-L-methionine. Catalysis depends on for 2'-O-MTase activity residues K2696 and E2732. The interaction with host SCRIB stretch occupies residues 2732–2736 (EMYFS). S-adenosyl-L-methionine is bound at residue Y2734. E2952, H2956, C2961, and C2964 together coordinate Zn(2+). The RdRp catalytic domain maps to 3042–3191 (GLFYADDTAG…RPIDDRFGKA (150 aa)). Zn(2+)-binding residues include H3226, C3242, and C3361.

The protein in the N-terminal section; belongs to the class I-like SAM-binding methyltransferase superfamily. mRNA cap 0-1 NS5-type methyltransferase family. As to quaternary structure, homodimer. Interacts (via N-terminus) with host EXOC1 (via C-terminus); this interaction results in EXOC1 degradation through the proteasome degradation pathway. In terms of assembly, forms heterodimers with envelope protein E in the endoplasmic reticulum and Golgi. Homodimer; in the endoplasmic reticulum and Golgi. Interacts with protein prM. Interacts with non-structural protein 1. As to quaternary structure, homodimer; Homohexamer when secreted. Interacts with envelope protein E. In terms of assembly, interacts (via N-terminus) with serine protease NS3. Forms a heterodimer with serine protease NS3. May form homooligomers. As to quaternary structure, forms a heterodimer with NS2B. Interacts with NS4B. Interacts with unphosphorylated RNA-directed RNA polymerase NS5; this interaction stimulates RNA-directed RNA polymerase NS5 guanylyltransferase activity. In terms of assembly, interacts with serine protease NS3. Homodimer. Interacts with host STAT2; this interaction inhibits the phosphorylation of the latter, and, when all viral proteins are present (polyprotein), targets STAT2 for degradation. Interacts with serine protease NS3. Post-translationally, specific enzymatic cleavages in vivo yield mature proteins. Cleavages in the lumen of endoplasmic reticulum are performed by host signal peptidase, whereas cleavages in the cytoplasmic side are performed by serine protease NS3. Signal cleavage at the 2K-4B site requires a prior NS3 protease-mediated cleavage at the 4A-2K site. Cleaved in post-Golgi vesicles by a host furin, releasing the mature small envelope protein M, and peptide pr. This cleavage is incomplete as up to 30% of viral particles still carry uncleaved prM. In terms of processing, N-glycosylated. Post-translationally, N-glycosylated. The excreted form is glycosylated and this is required for efficient secretion of the protein from infected cells. Acetylated by host KAT5. Acetylation modulates NS3 RNA-binding and unwinding activities and plays an important positive role for viral replication. In terms of processing, phosphorylated on serines residues. This phosphorylation may trigger NS5 nuclear localization.

The protein resides in the virion. The protein localises to the host nucleus. It localises to the host cytoplasm. Its subcellular location is the host perinuclear region. It is found in the secreted. The protein resides in the virion membrane. The protein localises to the host endoplasmic reticulum membrane. It carries out the reaction Selective hydrolysis of -Xaa-Xaa-|-Yaa- bonds in which each of the Xaa can be either Arg or Lys and Yaa can be either Ser or Ala.. The catalysed reaction is RNA(n) + a ribonucleoside 5'-triphosphate = RNA(n+1) + diphosphate. It catalyses the reaction a ribonucleoside 5'-triphosphate + H2O = a ribonucleoside 5'-diphosphate + phosphate + H(+). The enzyme catalyses ATP + H2O = ADP + phosphate + H(+). It carries out the reaction a 5'-end (5'-triphosphoguanosine)-ribonucleoside in mRNA + S-adenosyl-L-methionine = a 5'-end (N(7)-methyl 5'-triphosphoguanosine)-ribonucleoside in mRNA + S-adenosyl-L-homocysteine. The catalysed reaction is a 5'-end (N(7)-methyl 5'-triphosphoguanosine)-ribonucleoside in mRNA + S-adenosyl-L-methionine = a 5'-end (N(7)-methyl 5'-triphosphoguanosine)-(2'-O-methyl-ribonucleoside) in mRNA + S-adenosyl-L-homocysteine + H(+). Functionally, plays a role in virus budding by binding to the cell membrane and gathering the viral RNA into a nucleocapsid that forms the core of a mature virus particle. During virus entry, may induce genome penetration into the host cytoplasm after hemifusion induced by the surface proteins. Can migrate to the cell nucleus where it modulates host functions. Inhibits RNA silencing by interfering with host Dicer. Its function is as follows. Prevents premature fusion activity of envelope proteins in trans-Golgi by binding to envelope protein E at pH6.0. After virion release in extracellular space, gets dissociated from E dimers. In terms of biological role, acts as a chaperone for envelope protein E during intracellular virion assembly by masking and inactivating envelope protein E fusion peptide. prM is the only viral peptide matured by host furin in the trans-Golgi network probably to avoid catastrophic activation of the viral fusion activity in acidic Golgi compartment prior to virion release. prM-E cleavage is inefficient, and many virions are only partially matured. These uncleaved prM would play a role in immune evasion. Functionally, may play a role in virus budding. Exerts cytotoxic effects by activating a mitochondrial apoptotic pathway through M ectodomain. May display a viroporin activity. Binds to host cell surface receptor and mediates fusion between viral and cellular membranes. Envelope protein is synthesized in the endoplasmic reticulum in the form of heterodimer with protein prM. They play a role in virion budding in the ER, and the newly formed immature particle is covered with 60 spikes composed of heterodimer between precursor prM and envelope protein E. The virion is transported to the Golgi apparatus where the low pH causes dissociation of PrM-E heterodimers and formation of E homodimers. prM-E cleavage is inefficient, and many virions are only partially matured. These uncleaved prM would play a role in immune evasion. Its function is as follows. Involved in immune evasion, pathogenesis and viral replication. Once cleaved off the polyprotein, is targeted to three destinations: the viral replication cycle, the plasma membrane and the extracellular compartment. Essential for viral replication. Required for formation of the replication complex and recruitment of other non-structural proteins to the ER-derived membrane structures. Excreted as a hexameric lipoparticle that plays a role against host immune response. Antagonizing the complement function. Binds to the host macrophages and dendritic cells. Inhibits signal transduction originating from Toll-like receptor 3 (TLR3). In terms of biological role, component of the viral RNA replication complex that functions in virion assembly and antagonizes the host immune response. Functionally, required cofactor for the serine protease function of NS3. May have membrane-destabilizing activity and form viroporins. Displays three enzymatic activities: serine protease, NTPase and RNA helicase. NS3 serine protease, in association with NS2B, performs its autocleavage and cleaves the polyprotein at dibasic sites in the cytoplasm: C-prM, NS2A-NS2B, NS2B-NS3, NS3-NS4A, NS4A-2K and NS4B-NS5. NS3 RNA helicase binds RNA and unwinds dsRNA in the 3' to 5' direction. Its function is as follows. Regulates the ATPase activity of the NS3 helicase activity. NS4A allows NS3 helicase to conserve energy during unwinding. In terms of biological role, functions as a signal peptide for NS4B and is required for the interferon antagonism activity of the latter. Functionally, induces the formation of ER-derived membrane vesicles where the viral replication takes place. Inhibits interferon (IFN)-induced host STAT1 phosphorylation and nuclear translocation, thereby preventing the establishment of cellular antiviral state by blocking the IFN-alpha/beta pathway. Inhibits STAT2 translocation in the nucleus after IFN-alpha treatment. Replicates the viral (+) and (-) RNA genome, and performs the capping of genomes in the cytoplasm. NS5 methylates viral RNA cap at guanine N-7 and ribose 2'-O positions. Besides its role in RNA genome replication, also prevents the establishment of cellular antiviral state by blocking the interferon-alpha/beta (IFN-alpha/beta) signaling pathway. Inhibits host TYK2 and STAT2 phosphorylation, thereby preventing activation of JAK-STAT signaling pathway. In Homo sapiens (Human), this protein is Genome polyprotein.